A 326-amino-acid polypeptide reads, in one-letter code: UPF0324 membrane protein PBPRB0970 (326 aa).

10 consecutive transmembrane segments (helical) span residues 27–49 (FFIIALLCLLPIISSPVALILGF), 70–89 (LLAYSIIGLGFGIHLDQAIA), 94–116 (GFGLIVGSIFFTLIFGWFLTKAL), 123–145 (GHLIASGTAICGGSAIAAVAPAI), 155–177 (ALATVFVLNSIALFIFPAIGHLL), 184–206 (FGTWAAIAIHDTSSVVGAAGAYG), 216–235 (IKLARALWIVPIAFLSALLF), 242–261 (IGIPYFILFYCLAIVFAHFV), 271–290 (IFVASKRLLVVCLFLIGSGI), and 303–325 (LLLGVLLWVAIGVGSLSYILLNV).

It belongs to the UPF0324 family.

It is found in the cell membrane. The protein is UPF0324 membrane protein PBPRB0970 of Photobacterium profundum (strain SS9).